Here is a 207-residue protein sequence, read N- to C-terminus: Suppressor of IKBKE 1 (207 aa).

2 coiled-coil regions span residues 70–102 and 164–192; these read HILL…DALE and CKVQ…ESLQ.

This sequence belongs to the SIKE family. Interacts with IKBKE and TBK1 via its coiled coil region. Interaction with TBK1 is disrupted upon viral infection or TLR3 stimulation. Interacts with CDC42BPB. Interacts with SIKE1 which mediates association with the STRIPAK core complex composed of PP2A catalytic and scaffolding subunits, the striatins (PP2A regulatory subunits), the striatin-associated proteins MOB4, STRIP1 and STRIP2, PDCD10 and members of the STE20 kinases, such as STK24 and STK26.

Its subcellular location is the cytoplasm. In terms of biological role, physiological suppressor of IKK-epsilon and TBK1 that plays an inhibitory role in virus- and TLR3-triggered IRF3. Inhibits TLR3-mediated activation of interferon-stimulated response elements (ISRE) and the IFN-beta promoter. May act by disrupting the interactions of IKBKE or TBK1 with TICAM1/TRIF, IRF3 and RIGI. Does not inhibit NF-kappa-B activation pathways. Associates with the striatin-interacting phosphatase and kinase (STRIPAK) core complex, forming the extended (SIKE1:SLMAP)STRIPAK complex. The (SIKE1:SLMAP)STRIPAK complex dephosphorylates STK3 leading to the inhibition of Hippo signaling and the control of cell growth. The chain is Suppressor of IKBKE 1 (Sike1) from Mus musculus (Mouse).